Here is a 435-residue protein sequence, read N- to C-terminus: Methylenetetrahydrofolate--tRNA-(uracil-5-)-methyltransferase TrmFO (435 aa).

10-15 (GAGLAG) serves as a coordination point for FAD.

Belongs to the MnmG family. TrmFO subfamily. Requires FAD as cofactor.

It localises to the cytoplasm. The catalysed reaction is uridine(54) in tRNA + (6R)-5,10-methylene-5,6,7,8-tetrahydrofolate + NADH + H(+) = 5-methyluridine(54) in tRNA + (6S)-5,6,7,8-tetrahydrofolate + NAD(+). The enzyme catalyses uridine(54) in tRNA + (6R)-5,10-methylene-5,6,7,8-tetrahydrofolate + NADPH + H(+) = 5-methyluridine(54) in tRNA + (6S)-5,6,7,8-tetrahydrofolate + NADP(+). Its function is as follows. Catalyzes the folate-dependent formation of 5-methyl-uridine at position 54 (M-5-U54) in all tRNAs. In Geotalea uraniireducens (strain Rf4) (Geobacter uraniireducens), this protein is Methylenetetrahydrofolate--tRNA-(uracil-5-)-methyltransferase TrmFO.